Consider the following 418-residue polypeptide: Tyrosine--tRNA ligase (418 aa).

An L-tyrosine-binding site is contributed by tyrosine 34. Residues proline 39 to histidine 48 carry the 'HIGH' region motif. The L-tyrosine site is built by tyrosine 169 and glutamine 173. The short motif at lysine 229–serine 233 is the 'KMSKS' region element. Position 232 (lysine 232) interacts with ATP. The S4 RNA-binding domain maps to leucine 352–tyrosine 418.

It belongs to the class-I aminoacyl-tRNA synthetase family. TyrS type 1 subfamily. In terms of assembly, homodimer.

Its subcellular location is the cytoplasm. It catalyses the reaction tRNA(Tyr) + L-tyrosine + ATP = L-tyrosyl-tRNA(Tyr) + AMP + diphosphate + H(+). Its function is as follows. Catalyzes the attachment of tyrosine to tRNA(Tyr) in a two-step reaction: tyrosine is first activated by ATP to form Tyr-AMP and then transferred to the acceptor end of tRNA(Tyr). The sequence is that of Tyrosine--tRNA ligase from Streptococcus thermophilus (strain ATCC BAA-491 / LMD-9).